Here is a 337-residue protein sequence, read N- to C-terminus: MNTEATHDQNEALTTGARLRNAREQLGLSQQAVAERLCLKVSTVRDIEEDKAPADLASTFLRGYIRSYARLVHIPEEELLPGLEKQAPLRAAKVAPMQSFSLGKRRKKRDGWLMTFTWLVLFVVIGLSGAWWWQDHKAQQEEITTMADQSSAELSSNSEQGQSVPLNTSTTTDPATTSTPPASVDTTATNTQTPAVTAPAPAVDPQQNAVVSPSQANVDTAATPVPTAATTPDGAAPLPTDQAGVTTPAADPNALVMNFTADCWLEVTDATGKKLFSGMQRKDGNLNLTGQAPYKLKIGAPAAVQIQYQGKPVDLSRFIRTNQVARLTLNAEQSPAQ.

Topologically, residues 1–111 (MNTEATHDQN…LGKRRKKRDG (111 aa)) are cytoplasmic. In terms of domain architecture, HTH cro/C1-type spans 19-71 (LRNAREQLGLSQQAVAERLCLKVSTVRDIEEDKAPADLASTFLRGYIRSYARL). Positions 30-49 (QQAVAERLCLKVSTVRDIEE) form a DNA-binding region, H-T-H motif. Residues 112 to 132 (WLMTFTWLVLFVVIGLSGAWW) form a helical; Signal-anchor for type II membrane protein membrane-spanning segment. The Periplasmic portion of the chain corresponds to 133 to 337 (WQDHKAQQEE…TLNAEQSPAQ (205 aa)). Over residues 145–167 (TMADQSSAELSSNSEQGQSVPLN) the composition is skewed to polar residues. Residues 145–218 (TMADQSSAEL…AVVSPSQANV (74 aa)) are disordered. Positions 168–207 (TSTTTDPATTSTPPASVDTTATNTQTPAVTAPAPAVDPQQ) are enriched in low complexity. The span at 208 to 218 (NAVVSPSQANV) shows a compositional bias: polar residues.

Belongs to the RodZ family.

Its subcellular location is the cell inner membrane. Functionally, cytoskeletal protein that is involved in cell-shape control through regulation of the length of the long axis. In Shigella flexneri serotype 5b (strain 8401), this protein is Cytoskeleton protein RodZ.